Reading from the N-terminus, the 361-residue chain is MYAIEERAHPPPPPPLSMDRIPPPSSSYPTPGSGGGMVSAGIPSSSHLAPLSTVHEGRIWSLQVVQQPIRARMCGFGDKDRRPITPPPCIRLIVKDAQTEKEIDINEIDTSFYVLMVDLWNAEGTNEVNLVKHSATSPSISTAMSSSYPPPPQTLSPTYAQYPQNAYGQPVPYPQMNSYYPGNPQLQYQNPYGASPQTSYYQPYYPTGGHMPQANISPAQPVSTGPGGMFTRNLIGSLSASAFRLTDPDNKIGVWFILQDLSVRTEGVFRLKMSFVNVGTQSSDSPNGGVSVINHGSAPVLASVFSEPFQVFSAKKFPGVIESTTLSKCFALQGIKIPIRKDGVKGSRGRNNDDDDGDDYD.

Disordered regions lie at residues 1–44 and 139–161; these read MYAI…GIPS and SIST…TYAQ. The span at 10–26 shows a compositional bias: pro residues; it reads PPPPPPLSMDRIPPPSS. In terms of domain architecture, Velvet spans 54 to 340; sequence VHEGRIWSLQ…ALQGIKIPIR (287 aa).

Belongs to the velvet family. VelB subfamily. Component of the heterotrimeric velvet complex composed of laeA, veA and velB; VeA acting as a bridging protein between laeA and velB. Forms a heterodimeric complex with vosA; the formation of the velB-vosA complex is light-dependent.

The protein resides in the nucleus. It is found in the cytoplasm. Its function is as follows. Component of the velvet transcription factor complex that controls sexual/asexual developmental ratio in response to light, promoting sexual development in the darkness while stimulating asexual sporulation under illumination. The velvet complex acts as a global regulator for secondary metabolite gene expression. Component of the velB-VosA heterodimeric complex that plays a dual role in activating genes associated with spore maturation and repressing certain development-associated genes. The velB-VosA complex binds DNA through the DNA-binding domain of vosA that recognizes an 11-nucleotide consensus sequence 5'-CTGGCCGCGGC-3' consisting of two motifs in the promoters of key developmental regulatory genes. Controls the expression of the aflatoxin gene cluster. Likely coordinates with fluG to modulate sclerotial production. The chain is Velvet complex subunit B from Aspergillus flavus (strain ATCC 200026 / FGSC A1120 / IAM 13836 / NRRL 3357 / JCM 12722 / SRRC 167).